A 750-amino-acid chain; its full sequence is Probable methylmalonyl-CoA mutase large subunit (750 aa).

(R)-methylmalonyl-CoA is bound by residues Tyr91, Met94, Thr101, Arg103, Tyr105, and Ser130. Cob(II)alamin-binding residues include Phe133 and Ala155. 2 residues coordinate (R)-methylmalonyl-CoA: Thr211 and Gln213. Residues Val222 and Arg223 each coordinate cob(II)alamin. 4 residues coordinate (R)-methylmalonyl-CoA: Arg223, His260, Arg299, and Ser301. Residues Gly349, Glu386, Ala389, Gly628, His629, Asp630, Arg631, Ser674, Leu676, Gly705, and Thr728 each contribute to the cob(II)alamin site. In terms of domain architecture, B12-binding spans 616 to 748 (RPRILIAKMG…HRLAERLGYT (133 aa)).

Belongs to the methylmalonyl-CoA mutase family. In terms of assembly, heterodimer of an alpha and a beta chain. Requires adenosylcob(III)alamin as cofactor.

It carries out the reaction (R)-methylmalonyl-CoA = succinyl-CoA. Its pathway is metabolic intermediate metabolism; propanoyl-CoA degradation; succinyl-CoA from propanoyl-CoA: step 3/3. Catalyzes the isomerization of succinyl-CoA to methylmalonyl-CoA during synthesis of propionate from tricarboxylic acid-cycle intermediates. This chain is Probable methylmalonyl-CoA mutase large subunit (mutB), found in Mycobacterium bovis (strain ATCC BAA-935 / AF2122/97).